Here is a 138-residue protein sequence, read N- to C-terminus: Gamma-glutamylaminecyclotransferase (138 aa).

Glutamate 63 serves as the catalytic Proton acceptor.

This sequence belongs to the gamma-glutamylcyclotransferase family.

The enzyme catalyses epsilon-(gamma-L-glutamyl)-L-lysine = 5-oxo-L-proline + L-lysine. Functionally, may contribute to degradation of proteins cross-linked by transglutaminases by degrading the cross-link between a lysine and a glutamic acid residue. Catalyzes the formation of 5-oxo-L-proline from L-gamma-glutamyl-L-epsilon-lysine. In Xenopus laevis (African clawed frog), this protein is Gamma-glutamylaminecyclotransferase (ggact).